A 454-amino-acid chain; its full sequence is MAAKPGIPKGTRDFSPVEMAKRNYIFNTIRDVFHLFGYQQIETPSMENLSTLMGKYGDEGDKLLFKIQNSGDYFNGITDEELLSRNAVKLASKFCEKGLRYDLTVPFARYVVMHRDEISFPFKRYQIQPVWRADRPQKGRYREFYQCDADVVGSNSLLNEVELVQMIDRVFGKFGVRVSIKINNRKILTGIAEIIGEADKIVDITVAIDKLDKIGLENVNAELASKGIPQEAIDKLQPIILLSGSNEEKLETLKTVLATSEAGLKGVEESEFILKTVSALGVKSEVELDLTLARGLNYYTGAIFEVKALDVQIGSISGGGRYDNLTGVFGMDGMSGVGISFGADRIFDVLNQLDLYPKEAVNGTELLFVNFGDKEAAYCLPILTKVREAGVRAEIYPDASKMKKQMGYANDKQIPFVAIVGENEMNEGKLTLKNMTTGEQSLVTPDELLAVVKA.

This sequence belongs to the class-II aminoacyl-tRNA synthetase family. As to quaternary structure, homodimer.

It localises to the cytoplasm. The catalysed reaction is tRNA(His) + L-histidine + ATP = L-histidyl-tRNA(His) + AMP + diphosphate + H(+). This chain is Histidine--tRNA ligase, found in Phocaeicola vulgatus (strain ATCC 8482 / DSM 1447 / JCM 5826 / CCUG 4940 / NBRC 14291 / NCTC 11154) (Bacteroides vulgatus).